The chain runs to 572 residues: Proteinaceous RNase P 1, chloroplastic/mitochondrial (572 aa).

A chloroplast and mitochondrion-targeting transit peptide spans Met-1–Ala-70. PPR repeat units lie at residues Pro-96–Leu-130, Asn-136–Pro-174, Asn-175–Pro-209, and Arg-210–Pro-244. The PRORP domain maps to Met-338–Cys-565. Zn(2+) contacts are provided by Cys-344 and Cys-347. Residues Asp-399, Asp-474, Asp-475, and Asp-493 each coordinate Mn(2+). Zn(2+) contacts are provided by His-548 and Cys-565.

Belongs to the PPR family. P subfamily. Mg(2+) serves as cofactor. It depends on Mn(2+) as a cofactor.

The protein resides in the mitochondrion. Its subcellular location is the plastid. It is found in the chloroplast. It catalyses the reaction Endonucleolytic cleavage of RNA, removing 5'-extranucleotides from tRNA precursor.. Functionally, endonuclease RNase P responsible for the 5' maturation of tRNA precursors. Preferentially cleaves at the unusual cleavage site, but also able to cleave at the classical cleavage site. Also involved in the maturation of mRNAs in mitochondria. This Arabidopsis thaliana (Mouse-ear cress) protein is Proteinaceous RNase P 1, chloroplastic/mitochondrial (PRORP1).